The chain runs to 389 residues: Putative teichuronic acid biosynthesis glycosyltransferase TuaC (389 aa).

It belongs to the glycosyltransferase group 1 family. Glycosyltransferase 4 subfamily.

Its pathway is cell wall biogenesis; teichuronic acid biosynthesis. The sequence is that of Putative teichuronic acid biosynthesis glycosyltransferase TuaC (tuaC) from Bacillus subtilis (strain 168).